Consider the following 731-residue polypeptide: MSMFLLPVYNIPPAKGFLKKVQTRDCNFNIQLKIFCCLATNQVVSSLDFNQLDCIMGHESTFYTCRAVRRLLLGSNWYPFIDTLNESATGTRGPMYNGPGLIINNTDSTYKLTNICSNKYLPIVYSLETTDMPHEPLAYRAIYFPDLEQTPIDYMCMFKIICRYVTMSELEECYEYFLATVSPPFVNTCKKNYLRLVSALKTLPSTVLATPNPPDQLEFFKFSILSFMQEWSLNSLLNTTKKKIIAAVHSHPHIVIKLCSQNAFKEIKITDANFIEMQQTVNHVMPNFHAEITKRDPGSRPLKVSVLLPDGVKWVIYPPSLPIYRVTMCLASVAAVSSDTITSDKQDIRTASALVSIFRKINYAPKDKKKDMVLNSKVALDIFRNYIAQKYTEEDEFMTYRPIHRLGINNFKVNVFNTNMVINTKIFTHSVPWTYKSLMDIPRLTKNFVFKKYSVKEPSFTVSVFYCENMCNGAAININISGDLLTFLHAMGNMKCYMPIKNILPVSLSNWNSTLDLHGLENQSIVRTGRRDVFWTTNFPSAVSTKLGFNVSWFKAATATISKIYGTSLTSHVTKEVSPIISNNSARLSLLKNNLFSVLESRNRSQIQTLHKRMLECLVALCSFLRLDSHTVRRLAQKGMFDFSKKTISHAKNKHDCALLGYKKCNMIPKVLSFNKKTRLDEHGRNANFLAFISATGFHVPKIRAKLIKHVLRTLGLHWRRTYKHVYNTAQ.

It belongs to the herpesviridae UL87 family.

This is Gene 24 protein (24) from Saimiri sciureus (Common squirrel monkey).